A 326-amino-acid polypeptide reads, in one-letter code: MTSAPAAERPAAPAVPRIKWTVVEAVELFEQPFMDLLFRAQQVHRAHFDPNAVQRSTLLSIKTGGCSEDCGYCSQSTRHNTGLDREQLLKVAEVVEHAKAAKAKGASRFCMGAAWRGPKDKDMETVLAMVREVKALGLETCVTLGMLKGDQALQLKEAGLDYYNHNLDTAPEFYGQVITTHTLADRLDTLEQVRGAGINVCSGGIVGMGEGRRSRAGLLVQLANMASPPESVPINNLVPVPGTPLENVDKIDPFEFVRTIAAARIMMPTSFVRLSAGRQQMSDELQALCFMAGANSIFYGDRLLTTDNPDTDRDEALFARLGLRPV.

The region spanning 51–275 (NAVQRSTLLS…MMPTSFVRLS (225 aa)) is the Radical SAM core domain. Residues C66, C70, and C73 each contribute to the [4Fe-4S] cluster site. Residues C110, C141, C201, and R273 each contribute to the [2Fe-2S] cluster site.

Belongs to the radical SAM superfamily. Biotin synthase family. In terms of assembly, homodimer. Requires [4Fe-4S] cluster as cofactor. [2Fe-2S] cluster is required as a cofactor.

It catalyses the reaction (4R,5S)-dethiobiotin + (sulfur carrier)-SH + 2 reduced [2Fe-2S]-[ferredoxin] + 2 S-adenosyl-L-methionine = (sulfur carrier)-H + biotin + 2 5'-deoxyadenosine + 2 L-methionine + 2 oxidized [2Fe-2S]-[ferredoxin]. It functions in the pathway cofactor biosynthesis; biotin biosynthesis; biotin from 7,8-diaminononanoate: step 2/2. In terms of biological role, catalyzes the conversion of dethiobiotin (DTB) to biotin by the insertion of a sulfur atom into dethiobiotin via a radical-based mechanism. The sequence is that of Biotin synthase from Aromatoleum aromaticum (strain DSM 19018 / LMG 30748 / EbN1) (Azoarcus sp. (strain EbN1)).